Here is a 301-residue protein sequence, read N- to C-terminus: MSTQQTHLKQLEAESIQIMREVAAEFENPVMLYSVGKDSSVLLHLARKAFYPGKIPFPLLHVDTNWKFKEMIEFRDRMAKQYGFDLIVHKNPRGLEMNISPFTHGSAKHTDIMKTEGLKQALDMHGFDAAFGGARRDEEKSRAKERVYSFRDSKHRWDPKNQRPELWNIYNGKVDKGESIRVFPLSNWTELDIWQYIYLENIEIPSLYLAEPRPVVKRDGTLIMVDDERMELEPGEAVEQKMVRFRTLGCYPLTGAVESQATTLPEIIQEMLLCTTSERQGRVIDNDSAGSMEKKKMEGYF.

This sequence belongs to the PAPS reductase family. CysD subfamily. As to quaternary structure, heterodimer composed of CysD, the smaller subunit, and CysN.

The enzyme catalyses sulfate + ATP + H(+) = adenosine 5'-phosphosulfate + diphosphate. It functions in the pathway sulfur metabolism; hydrogen sulfide biosynthesis; sulfite from sulfate: step 1/3. Its function is as follows. With CysN forms the ATP sulfurylase (ATPS) that catalyzes the adenylation of sulfate producing adenosine 5'-phosphosulfate (APS) and diphosphate, the first enzymatic step in sulfur assimilation pathway. APS synthesis involves the formation of a high-energy phosphoric-sulfuric acid anhydride bond driven by GTP hydrolysis by CysN coupled to ATP hydrolysis by CysD. This is Sulfate adenylyltransferase subunit 2 from Shewanella loihica (strain ATCC BAA-1088 / PV-4).